A 285-amino-acid chain; its full sequence is Pantothenate synthetase (285 aa).

32 to 39 (MGALHDGH) is a binding site for ATP. Histidine 39 acts as the Proton donor in catalysis. Glutamine 63 serves as a coordination point for (R)-pantoate. Glutamine 63 contacts beta-alanine. Position 149–152 (149–152 (GEKD)) interacts with ATP. Glutamine 155 contacts (R)-pantoate. ATP contacts are provided by residues valine 178 and 186-189 (MSSR).

It belongs to the pantothenate synthetase family. Homodimer.

The protein resides in the cytoplasm. The enzyme catalyses (R)-pantoate + beta-alanine + ATP = (R)-pantothenate + AMP + diphosphate + H(+). Its pathway is cofactor biosynthesis; (R)-pantothenate biosynthesis; (R)-pantothenate from (R)-pantoate and beta-alanine: step 1/1. Catalyzes the condensation of pantoate with beta-alanine in an ATP-dependent reaction via a pantoyl-adenylate intermediate. This Ruegeria pomeroyi (strain ATCC 700808 / DSM 15171 / DSS-3) (Silicibacter pomeroyi) protein is Pantothenate synthetase.